The chain runs to 420 residues: Glyceraldehyde-3-phosphate dehydrogenase GAPCP2, chloroplastic (420 aa).

A chloroplast-targeting transit peptide spans 1–66 (MALSSLLRSA…YNAKRVQPIK (66 aa)). NAD(+)-binding positions include 94–95 (RI), D116, and R162. D-glyceraldehyde 3-phosphate is bound by residues 233-235 (SCT), T264, 293-294 (TG), and R316. The active-site Nucleophile is C234. Position 398 (N398) interacts with NAD(+).

The protein belongs to the glyceraldehyde-3-phosphate dehydrogenase family. In terms of assembly, homotetramer. Expressed in shoot and root vasculature, leaf veins and vascular tissue of flowers and siliques.

Its subcellular location is the plastid. The protein resides in the chloroplast stroma. The catalysed reaction is D-glyceraldehyde 3-phosphate + phosphate + NAD(+) = (2R)-3-phospho-glyceroyl phosphate + NADH + H(+). Its function is as follows. Involved in plastidial glycolytic pathway and plays a specific role in glycolytic energy production in non-green plastids and chloroplasts. Essential for breakdown of starch to form sucrose for export to non-photosynthetic tissues, and to generate primary metabolites for anabolic pathways such as fatty acid and amino acid synthesis. Plays an important role in plant development by providing substrates for the phosphorylated pathway of serine biosynthesis in roots. Plays a crucial role in pollen development. Functionally redundant with GAPCP1. The chain is Glyceraldehyde-3-phosphate dehydrogenase GAPCP2, chloroplastic (GAPCP2) from Arabidopsis thaliana (Mouse-ear cress).